A 140-amino-acid chain; its full sequence is Lymphocyte antigen 6H (140 aa).

The signal sequence occupies residues 1 to 25 (MLPAAMKGLGLALLAVLLCSAPAHG). The UPAR/Ly6 domain occupies 26–91 (LWCQDCTLTT…RHFFSDYLMG (66 aa)). 4 disulfides stabilise this stretch: Cys-28-Cys-52, Cys-31-Cys-40, Cys-45-Cys-73, and Cys-77-Cys-104. Asn-36 carries an N-linked (GlcNAc...) asparagine glycan. The GPI-anchor amidated glycine moiety is linked to residue Gly-115. The propeptide at 116–140 (AGHSPWALAGGLLLSLGPALLWAGP) is removed in mature form.

Interacts with CHRNA4 and CHRNA7.

The protein localises to the cell membrane. Functionally, believed to act as a modulator of nicotinic acetylcholine receptors (nAChRs) activity. In vitro inhibits alpha-3:beta-4-containing nAChRs maximum response. May play a role in the intracellular trafficking of alpha-7-containing nAChRs and may inhibit their expression at the cell surface. Seems to inhibit alpha-7/CHRNA7 signaling in hippocampal neurons. This is Lymphocyte antigen 6H (LY6H) from Macaca fascicularis (Crab-eating macaque).